A 198-amino-acid polypeptide reads, in one-letter code: Probable GTP-binding protein EngB (198 aa).

The region spanning 22 to 195 (NIPEVALAGR…LEVIGRWVGL (174 aa)) is the EngB-type G domain. GTP contacts are provided by residues 30-37 (GRSNVGKS), 57-61 (GRTRL), 75-78 (DLPG), 142-145 (TKAD), and 174-176 (FSA). Ser-37 and Thr-59 together coordinate Mg(2+).

Belongs to the TRAFAC class TrmE-Era-EngA-EngB-Septin-like GTPase superfamily. EngB GTPase family. Requires Mg(2+) as cofactor.

Functionally, necessary for normal cell division and for the maintenance of normal septation. This is Probable GTP-binding protein EngB from Pelotomaculum thermopropionicum (strain DSM 13744 / JCM 10971 / SI).